The primary structure comprises 295 residues: MMRILLFVATNLAVVLVASITLSLFGFNGFMAANGVDLNLGQLLVFCAVFGFAGSLVSLFISKWMAKMTTGTQIITQPRTRHEQWLLQTVEELSREAGIKMPEVGIFPAYEANAFATGWNRNDALVAVSQGLLERFSPDEVRAVLAHEIGHVANGDMVTMALVQGVVNTFVMFFARIIGNFVDRVIFKNEEGHGIAYFVATIVAELVLGILASIIVMWYSRRREFRADEAGAHLAGTGAMIGALQRLRSEQGLPVHMPDTMKAFGINGGLKHGLAGLLMSHPPLEDRIDALRRRG.

2 helical membrane-spanning segments follow: residues 4-24 (ILLF…TLSL) and 41-61 (GQLL…SLFI). Histidine 147 serves as a coordination point for Zn(2+). Glutamate 148 is a catalytic residue. A Zn(2+)-binding site is contributed by histidine 151. 2 helical membrane-spanning segments follow: residues 158 to 178 (VTMA…ARII) and 198 to 218 (FVAT…IVMW). Zn(2+) is bound at residue glutamate 224.

Belongs to the peptidase M48B family. The cofactor is Zn(2+).

The protein resides in the cell inner membrane. In Pseudomonas entomophila (strain L48), this protein is Protease HtpX.